Here is a 794-residue protein sequence, read N- to C-terminus: DNA ligase (794 aa).

NAD(+) is bound by residues 35–39 (DAEYD), 84–85 (SL), and E126. K128 functions as the N6-AMP-lysine intermediate in the catalytic mechanism. 4 residues coordinate NAD(+): R149, E186, K302, and K326. 4 residues coordinate Zn(2+): C420, C423, C450, and C456. Residues 711-794 (VEGLPLAGQT…KLLDEYGVAH (84 aa)) enclose the BRCT domain.

This sequence belongs to the NAD-dependent DNA ligase family. LigA subfamily. The cofactor is Mg(2+). Mn(2+) serves as cofactor.

The enzyme catalyses NAD(+) + (deoxyribonucleotide)n-3'-hydroxyl + 5'-phospho-(deoxyribonucleotide)m = (deoxyribonucleotide)n+m + AMP + beta-nicotinamide D-nucleotide.. Its function is as follows. DNA ligase that catalyzes the formation of phosphodiester linkages between 5'-phosphoryl and 3'-hydroxyl groups in double-stranded DNA using NAD as a coenzyme and as the energy source for the reaction. It is essential for DNA replication and repair of damaged DNA. The sequence is that of DNA ligase from Pseudomonas paraeruginosa (strain DSM 24068 / PA7) (Pseudomonas aeruginosa (strain PA7)).